The chain runs to 249 residues: uncharacterized protein (249 aa).

An N-terminal signal peptide occupies residues 1 to 20 (MSNQNKVLSLGLLLLAAVAA).

This sequence belongs to the IIV-6 117L family.

This is an uncharacterized protein from Acheta domesticus (House cricket).